A 911-amino-acid polypeptide reads, in one-letter code: Gem-associated protein 4a (911 aa).

In terms of assembly, component of the core survival motor neuron (SMN) complex composed of Smn, Gem2, Gem3, rig/Gem5 and one of 3 almost identical Gem4 paralogs encoded by Glos/Gem4a, Gem4b or Gem4c. Interacts with Smn; the interaction is probably indirect.

Functionally, component of the survival motor neuron (SMN) complex that catalyzes the assembly of small nuclear ribonucleoproteins (snRNPs), the building blocks of the spliceosome, and thereby plays an important role in the splicing of cellular pre-mRNAs. One of 3 almost identical paralogs (Glos/Gem4a, Gem4b and Gem4c), resulting from a genomic triplication, that have some redundant function. Required for neuromuscular function and organismal viability. The protein is Gem-associated protein 4a of Drosophila melanogaster (Fruit fly).